A 600-amino-acid chain; its full sequence is Elongation factor 4 (600 aa).

The region spanning 5 to 187 (KYIRNFSIIA…AIVNKLPPPK (183 aa)) is the tr-type G domain. GTP-binding positions include 17–22 (DHGKST) and 134–137 (NKID).

It belongs to the TRAFAC class translation factor GTPase superfamily. Classic translation factor GTPase family. LepA subfamily.

Its subcellular location is the cell inner membrane. The enzyme catalyses GTP + H2O = GDP + phosphate + H(+). In terms of biological role, required for accurate and efficient protein synthesis under certain stress conditions. May act as a fidelity factor of the translation reaction, by catalyzing a one-codon backward translocation of tRNAs on improperly translocated ribosomes. Back-translocation proceeds from a post-translocation (POST) complex to a pre-translocation (PRE) complex, thus giving elongation factor G a second chance to translocate the tRNAs correctly. Binds to ribosomes in a GTP-dependent manner. The protein is Elongation factor 4 of Rickettsia felis (strain ATCC VR-1525 / URRWXCal2) (Rickettsia azadi).